The primary structure comprises 1264 residues: Imitation switch two complex protein 1 (1264 aa).

A WAC domain is found at Val23–Lys130. Disordered stretches follow at residues Lys130 to Asn153, Pro275 to Ala374, Gln482 to Asp508, Ala627 to Arg655, and Leu803 to Asn825. The span at Ser132 to Asp147 shows a compositional bias: low complexity. 2 stretches are compositionally biased toward polar residues: residues Arg280 to Pro289 and Lys299 to Ala310. The region spanning Phe423–Glu483 is the DDT domain.

In terms of assembly, component of the ISW2 complex, which at least consists of ISW2, ITC1, DLS1 and DPB4. May form a stable subcomplex with ISW2.

The protein localises to the nucleus. In terms of biological role, functions as a component of the ISW2 complex, which acts in remodeling the chromatin by catalyzing an ATP-dependent alteration in the structure of nucleosomal DNA. The ISW2 complex is involved in coordinating transcriptional repression and in inheritance of telomeric silencing. It is involved in repression of MAT a-specific genes, INO1, and early meiotic genes during mitotic growth dependent upon transcription factor UME6 and in a parallel pathway to the RPD3-SIN3 histone deacetylase complex. ITC1 is required for nucleosome-stimulated ATPase activity and chromatin-remodeling activity of the complex. Required for the repression of MATa a-specific genes. This is Imitation switch two complex protein 1 (ITC1) from Saccharomyces cerevisiae (strain ATCC 204508 / S288c) (Baker's yeast).